The following is an 872-amino-acid chain: DNA mismatch repair protein MutS (872 aa).

Residue 623 to 630 (GPNMAGKS) coordinates ATP.

This sequence belongs to the DNA mismatch repair MutS family.

This protein is involved in the repair of mismatches in DNA. It is possible that it carries out the mismatch recognition step. This protein has a weak ATPase activity. The sequence is that of DNA mismatch repair protein MutS from Trichlorobacter lovleyi (strain ATCC BAA-1151 / DSM 17278 / SZ) (Geobacter lovleyi).